The sequence spans 104 residues: Small ribosomal subunit protein uS10 (104 aa).

The protein belongs to the universal ribosomal protein uS10 family. In terms of assembly, part of the 30S ribosomal subunit.

Involved in the binding of tRNA to the ribosomes. The polypeptide is Small ribosomal subunit protein uS10 (Albidiferax ferrireducens (strain ATCC BAA-621 / DSM 15236 / T118) (Rhodoferax ferrireducens)).